A 554-amino-acid chain; its full sequence is Hydroxylamine reductase (554 aa).

[2Fe-2S] cluster contacts are provided by cysteine 3, cysteine 6, cysteine 18, and cysteine 25. Positions 252, 276, 320, 408, 436, 461, 495, and 497 each coordinate hybrid [4Fe-2O-2S] cluster. Cysteine 408 carries the cysteine persulfide modification.

It belongs to the HCP family. [2Fe-2S] cluster is required as a cofactor. It depends on hybrid [4Fe-2O-2S] cluster as a cofactor.

It is found in the cytoplasm. It carries out the reaction A + NH4(+) + H2O = hydroxylamine + AH2 + H(+). Catalyzes the reduction of hydroxylamine to form NH(3) and H(2)O. This Shewanella amazonensis (strain ATCC BAA-1098 / SB2B) protein is Hydroxylamine reductase.